Consider the following 414-residue polypeptide: 3-ketoacyl-CoA thiolase, peroxisomal (414 aa).

The transit peptide at 1 to 9 (MDRLNNLAT) directs the protein to the peroxisome. Residues 1–9 (MDRLNNLAT) are PTS2-type peroxisomal targeting signal. The active-site Acyl-thioester intermediate is the Cys115. Residues His370 and Cys400 each act as proton acceptor in the active site.

Belongs to the thiolase-like superfamily. Thiolase family. In terms of assembly, homodimer. Interacts (via PTS2-type peroxisomal targeting signal region) with PEX7; leading to its translocation into peroxisomes.

It localises to the peroxisome. The catalysed reaction is an acyl-CoA + acetyl-CoA = a 3-oxoacyl-CoA + CoA. The protein operates within lipid metabolism; fatty acid metabolism. Responsible for the thiolytic cleavage of straight chain 3-keto fatty acyl-CoAs (3-oxoacyl-CoAs). The protein is 3-ketoacyl-CoA thiolase, peroxisomal (POT1) of Yarrowia lipolytica (strain CLIB 122 / E 150) (Yeast).